Reading from the N-terminus, the 169-residue chain is Peptide deformylase 1 (169 aa).

Fe cation is bound by residues C92 and H134. The active site involves E135. H138 lines the Fe cation pocket.

This sequence belongs to the polypeptide deformylase family. The cofactor is Fe(2+).

It carries out the reaction N-terminal N-formyl-L-methionyl-[peptide] + H2O = N-terminal L-methionyl-[peptide] + formate. Functionally, removes the formyl group from the N-terminal Met of newly synthesized proteins. Requires at least a dipeptide for an efficient rate of reaction. N-terminal L-methionine is a prerequisite for activity but the enzyme has broad specificity at other positions. This Ralstonia nicotianae (strain ATCC BAA-1114 / GMI1000) (Ralstonia solanacearum) protein is Peptide deformylase 1.